Consider the following 607-residue polypeptide: MDKQDRYNRRKNIRNFSIIAHIDHGKSTLADRILENTKSVETRDMQSQLLDSMDLERERGITIKLNAVRLKYEAKDGETYTFHLIDTPGHVDFTYEVSRSLAACEGAILVVDAAQGIEAQTLANVYLALDNDLELLPVINKIDLPAAEPERVKQELEDVIGIDKEDVVLASAKSNIGIEDILEKIVEVVPPPEGDPEAPLKALIFDSEYDPYRGVISSIRVMEGVVKAGDRIKMMATGKEFEVTEVGINTPKQLSVDELTVGDVGYIIASIKNVDDSRVGDTITHAERPAEAPLQGYKKMNPMVFCGLFPIDNKDYNDLREALEKLQLNDASLEFEPESSQALGFGYRTGFLGMLHMEIIQERIEREFGIELIATAPSVIYQCILKSGEEVSVDNPANMPDRDKIETIYEPFVRATMMVPNDYVGAVMELCQRKRGQFINMEYMDDIRVNIIYEIPLSEVVFDFFDQLKSNTKGYASFDYEFIDNKESDLVKMDILLNGEKVDALSFIVHKEFAYERGKTLVDKLKTLIPRQQFEVPVQAAVGQKIVARTNIKSMGKNVLSKCYGGDITRKRKLLEKQKAGKAKMKAVGNVEIPQDAFLAVLKMDED.

Positions 11-193 (KNIRNFSIIA…KIVEVVPPPE (183 aa)) constitute a tr-type G domain. GTP contacts are provided by residues 23-28 (DHGKST) and 140-143 (NKID).

Belongs to the TRAFAC class translation factor GTPase superfamily. Classic translation factor GTPase family. LepA subfamily.

Its subcellular location is the cell membrane. It carries out the reaction GTP + H2O = GDP + phosphate + H(+). Functionally, required for accurate and efficient protein synthesis under certain stress conditions. May act as a fidelity factor of the translation reaction, by catalyzing a one-codon backward translocation of tRNAs on improperly translocated ribosomes. Back-translocation proceeds from a post-translocation (POST) complex to a pre-translocation (PRE) complex, thus giving elongation factor G a second chance to translocate the tRNAs correctly. Binds to ribosomes in a GTP-dependent manner. The protein is Elongation factor 4 of Staphylococcus saprophyticus subsp. saprophyticus (strain ATCC 15305 / DSM 20229 / NCIMB 8711 / NCTC 7292 / S-41).